The following is a 374-amino-acid chain: Eukaryotic translation initiation factor 3 subunit M (374 aa).

Residue Ser-2 is modified to N-acetylserine. Phosphoserine occurs at positions 2 and 152. Positions 180–339 (AASKVMVELL…RKVVVSHSTH (160 aa)) constitute a PCI domain. Lys-254 is subject to N6-acetyllysine. The interval 344–374 (KQQWQQLYDTLNAWKQNLNKVKNSLLSLSDT) is interaction with HSV-1 and HSV-2. Residue Ser-367 is modified to Phosphoserine.

In terms of assembly, component of the eukaryotic translation initiation factor 3 (eIF-3) complex, which is composed of 13 subunits: EIF3A, EIF3B, EIF3C, EIF3D, EIF3E, EIF3F, EIF3G, EIF3H, EIF3I, EIF3J, EIF3K, EIF3L and EIF3M. The eIF-3 complex appears to include 3 stable modules: module A is composed of EIF3A, EIF3B, EIF3G and EIF3I; module B is composed of EIF3F, EIF3H, and EIF3M; and module C is composed of EIF3C, EIF3D, EIF3E, EIF3K and EIF3L. EIF3C of module C binds EIF3B of module A and EIF3H of module B, thereby linking the three modules. EIF3J is a labile subunit that binds to the eIF-3 complex via EIF3B. The eIF-3 complex interacts with RPS6KB1 under conditions of nutrient depletion. Mitogenic stimulation leads to binding and activation of a complex composed of MTOR and RPTOR, leading to phosphorylation and release of RPS6KB1 and binding of EIF4B to eIF-3. As to expression, broadly expressed.

The protein localises to the cytoplasm. In terms of biological role, component of the eukaryotic translation initiation factor 3 (eIF-3) complex, which is required for several steps in the initiation of protein synthesis. The eIF-3 complex associates with the 40S ribosome and facilitates the recruitment of eIF-1, eIF-1A, eIF-2:GTP:methionyl-tRNAi and eIF-5 to form the 43S pre-initiation complex (43S PIC). The eIF-3 complex stimulates mRNA recruitment to the 43S PIC and scanning of the mRNA for AUG recognition. The eIF-3 complex is also required for disassembly and recycling of post-termination ribosomal complexes and subsequently prevents premature joining of the 40S and 60S ribosomal subunits prior to initiation. The eIF-3 complex specifically targets and initiates translation of a subset of mRNAs involved in cell proliferation, including cell cycling, differentiation and apoptosis, and uses different modes of RNA stem-loop binding to exert either translational activation or repression. (Microbial infection) May favor virus entry in case of infection with herpes simplex virus 1 (HSV1) or herpes simplex virus 2 (HSV2). The chain is Eukaryotic translation initiation factor 3 subunit M from Homo sapiens (Human).